The following is a 169-amino-acid chain: MRTLKIEPLTKEAFAPFGDVIETAGSDYFMINNGSTRRYHKLATVETAQPEDNAIISIFSAEKLEMPLRIRMLERHPLGSQAFIPLLGNPFLVVVAPLGDVPVPGLVRAFLTNGRQGVNYHRGVWHHPVLTIEKRDDFLVVDRSGSGNNCDEHFFTEDEQLLLDPQSNQ.

It belongs to the ureidoglycolate lyase family. As to quaternary structure, homodimer. The cofactor is Ni(2+).

The enzyme catalyses (S)-ureidoglycolate = urea + glyoxylate. It functions in the pathway nitrogen metabolism; (S)-allantoin degradation. In terms of biological role, catalyzes the catabolism of the allantoin degradation intermediate (S)-ureidoglycolate, generating urea and glyoxylate. Involved in the utilization of allantoin as nitrogen source. This Pseudomonas aeruginosa (strain LESB58) protein is Ureidoglycolate lyase.